The following is a 65-amino-acid chain: Large ribosomal subunit protein bL35 (65 aa).

Residues M1–K28 are disordered.

The protein belongs to the bacterial ribosomal protein bL35 family.

The protein is Large ribosomal subunit protein bL35 of Acidobacterium capsulatum (strain ATCC 51196 / DSM 11244 / BCRC 80197 / JCM 7670 / NBRC 15755 / NCIMB 13165 / 161).